Here is a 100-residue protein sequence, read N- to C-terminus: Putative membrane protein insertion efficiency factor (100 aa).

Belongs to the UPF0161 family.

It is found in the cell membrane. Its function is as follows. Could be involved in insertion of integral membrane proteins into the membrane. The polypeptide is Putative membrane protein insertion efficiency factor (Enterococcus faecalis (strain ATCC 700802 / V583)).